Reading from the N-terminus, the 214-residue chain is Single-pass membrane and coiled-coil domain-containing protein 1 (214 aa).

The stretch at 6 to 42 (TTLISLKEAMKRVDHKLQALETQFKELDFTKDNLMQK) forms a coiled coil. A helical membrane pass occupies residues 65 to 81 (ALQLTSMELNILYSYVI).

It is found in the membrane. The polypeptide is Single-pass membrane and coiled-coil domain-containing protein 1 (SMCO1) (Homo sapiens (Human)).